The chain runs to 290 residues: Sodium/potassium-transporting ATPase subunit beta-2 (290 aa).

Topologically, residues 1–39 (MVIQKEKKSCGQVVEEWKEFVWNPRTHQFMGRTGTSWAF) are cytoplasmic. The chain crosses the membrane as a helical; Signal-anchor for type II membrane protein span at residues 40–67 (ILLFYLVFYGFLTAMFTLTMWVMLQTVS). Topologically, residues 68 to 290 (DHTPKYQDRL…VAFKLRINKT (223 aa)) are extracellular. Asn96 and Asn118 each carry an N-linked (GlcNAc...) asparagine glycan. Cysteines 129 and 150 form a disulfide. N-linked (GlcNAc...) asparagine glycans are attached at residues Asn153 and Asn159. Cys160 and Cys177 are disulfide-bonded. N-linked (GlcNAc...) asparagine glycosylation is found at Asn193, Asn197, and Asn238. The interval 193 to 290 (NQSMNVTCAG…VAFKLRINKT (98 aa)) is immunoglobulin-like. An intrachain disulfide couples Cys200 to Cys261.

Belongs to the X(+)/potassium ATPases subunit beta family. In terms of assembly, the sodium/potassium-transporting ATPase is composed of a catalytic alpha subunit, an auxiliary non-catalytic beta subunit and an additional regulatory subunit. Interacts with BSG.

It is found in the cell membrane. Functionally, this is the non-catalytic component of the active enzyme, which catalyzes the hydrolysis of ATP coupled with the exchange of Na(+) and K(+) ions across the plasma membrane. The exact function of the beta-2 subunit is not known. In terms of biological role, mediates cell adhesion of neurons and astrocytes, and promotes neurite outgrowth. The protein is Sodium/potassium-transporting ATPase subunit beta-2 (ATP1B2) of Ochotona curzoniae (Black-lipped pika).